The sequence spans 142 residues: Transmembrane protein 170A (142 aa).

Residues 1–48 lie on the Lumenal side of the membrane; that stretch reads MEGGGGGLGGEPGLLQQILSLRLVPRVGNVTDCQRATLCSFPEMWYGV. N-linked (GlcNAc...) asparagine glycosylation is present at asparagine 29. A helical membrane pass occupies residues 49–69; that stretch reads FLWALVSSLFFHIPAGLLALF. Residues 70-78 are Cytoplasmic-facing; sequence TLRHHKYGR. Residues 79-99 form a helical membrane-spanning segment; it reads FMSVGIFLMGVLGPISAGILT. At 100 to 114 the chain is on the lumenal side; that stretch reads SAAIAGVYKAAGKEM. The helical transmembrane segment at 115–135 threads the bilayer; it reads IPFEALVLGVGQTFCVLIVSF. The Cytoplasmic segment spans residues 136–142; it reads LRILATL.

The protein belongs to the TMEM170 family.

Its subcellular location is the endoplasmic reticulum membrane. The protein resides in the nucleus envelope. Functionally, may regulate membrane morphogenesis in the endoplasmic reticulum (ER) by promoting ER sheet formation at the expense of ER tubules. The protein is Transmembrane protein 170A (tmem170a) of Xenopus laevis (African clawed frog).